The following is a 365-amino-acid chain: Flagellar P-ring protein (365 aa).

Residues 1–19 (MIKFLSALILLLVTTAAQA) form the signal peptide.

It belongs to the FlgI family. The basal body constitutes a major portion of the flagellar organelle and consists of four rings (L,P,S, and M) mounted on a central rod.

It localises to the periplasm. It is found in the bacterial flagellum basal body. Functionally, assembles around the rod to form the L-ring and probably protects the motor/basal body from shearing forces during rotation. This Shigella dysenteriae serotype 1 (strain Sd197) protein is Flagellar P-ring protein.